The primary structure comprises 247 residues: 5'-nucleotidase SurE (247 aa).

4 residues coordinate a divalent metal cation: aspartate 8, aspartate 9, serine 39, and asparagine 95.

This sequence belongs to the SurE nucleotidase family. It depends on a divalent metal cation as a cofactor.

The protein resides in the cytoplasm. The enzyme catalyses a ribonucleoside 5'-phosphate + H2O = a ribonucleoside + phosphate. Nucleotidase that shows phosphatase activity on nucleoside 5'-monophosphates. The protein is 5'-nucleotidase SurE of Thermotoga petrophila (strain ATCC BAA-488 / DSM 13995 / JCM 10881 / RKU-1).